A 618-amino-acid chain; its full sequence is Membrane protein insertase YidC (618 aa).

A run of 6 helical transmembrane segments spans residues 3 to 23 (KNTI…SFLS), 363 to 383 (WGLS…IVVF), 439 to 459 (LPML…PSAI), 478 to 498 (FITF…FCLL), 520 to 540 (PQMA…LFVL), and 545 to 565 (SGLN…MIIL).

It belongs to the OXA1/ALB3/YidC family. Type 1 subfamily. As to quaternary structure, interacts with the Sec translocase complex via SecD. Specifically interacts with transmembrane segments of nascent integral membrane proteins during membrane integration.

It is found in the cell inner membrane. Functionally, required for the insertion and/or proper folding and/or complex formation of integral membrane proteins into the membrane. Involved in integration of membrane proteins that insert both dependently and independently of the Sec translocase complex, as well as at least some lipoproteins. Aids folding of multispanning membrane proteins. The sequence is that of Membrane protein insertase YidC from Bacteroides fragilis (strain ATCC 25285 / DSM 2151 / CCUG 4856 / JCM 11019 / LMG 10263 / NCTC 9343 / Onslow / VPI 2553 / EN-2).